Consider the following 177-residue polypeptide: MSRVAKAPVVIPAGVEVKLNGQVISIKGKNGELTRTVHDAVIVKQEANALNFRPREGFRNAWAQAGTTRALLNAMVVGVTEGFTKKLQLVGVGYRAAVKGNVVNLALGFSHPIEHQLPAGITAECPSQTEIVLKGVDKQVIGQAAADLRAYRRPEPYKGKGVRYADEVVRTKEAKKK.

The protein belongs to the universal ribosomal protein uL6 family. In terms of assembly, part of the 50S ribosomal subunit.

In terms of biological role, this protein binds to the 23S rRNA, and is important in its secondary structure. It is located near the subunit interface in the base of the L7/L12 stalk, and near the tRNA binding site of the peptidyltransferase center. The protein is Large ribosomal subunit protein uL6 of Buchnera aphidicola subsp. Acyrthosiphon kondoi (Acyrthosiphon kondoi symbiotic bacterium).